The sequence spans 166 residues: MNLDKDLERIALQEARLQFRSFDAHSAWVLGSRLRALAEQRNLAITIEIQVNGNPLFLSAMPGTAPNNLDWARRKKNVVTLMRRSSYAVGLQLQKDGTSLIEQAGLELRDYAAHGGCFPILLRGTGCIGTVAVSGLPQRDDHELIVEALAGMLEERLEELALDNLA.

Belongs to the UPF0303 family.

This chain is UPF0303 protein Avin_29320, found in Azotobacter vinelandii (strain DJ / ATCC BAA-1303).